A 484-amino-acid chain; its full sequence is UDP-N-acetylmuramate--L-alanine ligase (484 aa).

125–131 (GTHGKTT) contacts ATP.

The protein belongs to the MurCDEF family.

Its subcellular location is the cytoplasm. The enzyme catalyses UDP-N-acetyl-alpha-D-muramate + L-alanine + ATP = UDP-N-acetyl-alpha-D-muramoyl-L-alanine + ADP + phosphate + H(+). It participates in cell wall biogenesis; peptidoglycan biosynthesis. Cell wall formation. The protein is UDP-N-acetylmuramate--L-alanine ligase of Buchnera aphidicola subsp. Acyrthosiphon pisum (strain Tuc7).